A 238-amino-acid polypeptide reads, in one-letter code: MEEAKVPMVELGPITFNLTLLAVCIVTILLIFGFVFWASRQMTLKPKGKQTALEYLISFVNGIGEEHLDSHLQKSYSLLLFTIFLFVAVANNLGLFTKLETTSGYNLWTSPTANLAFDLALSLFVTLLVHIEGIRRRGFGAYLKRFATPWPMTPMNLLEEFTNFLSLAIRLFGNIFAGEVVTGLIVQLANYRLYWWPIAFLVNIAWTAFSIFISCIQAFVFTKLTATYLGKKVNESEE.

5 helical membrane passes run 18 to 38 (LTLLAVCIVTILLIFGFVFWA), 76 to 96 (YSLLLFTIFLFVAVANNLGLF), 114 to 134 (NLAFDLALSLFVTLLVHIEGI), 166 to 186 (SLAIRLFGNIFAGEVVTGLIV), and 193 to 213 (LYWWPIAFLVNIAWTAFSIFI).

The protein belongs to the ATPase A chain family. F-type ATPases have 2 components, CF(1) - the catalytic core - and CF(0) - the membrane proton channel. CF(1) has five subunits: alpha(3), beta(3), gamma(1), delta(1), epsilon(1). CF(0) has three main subunits: a(1), b(2) and c(9-12). The alpha and beta chains form an alternating ring which encloses part of the gamma chain. CF(1) is attached to CF(0) by a central stalk formed by the gamma and epsilon chains, while a peripheral stalk is formed by the delta and b chains.

It is found in the cell membrane. Key component of the proton channel; it plays a direct role in the translocation of protons across the membrane. This Streptococcus equi subsp. zooepidemicus (strain H70) protein is ATP synthase subunit a.